A 507-amino-acid polypeptide reads, in one-letter code: Pyruvate kinase (507 aa).

Arg50 is a substrate binding site. Residues Asn52, Ser54, Asp84, and Thr85 each contribute to the K(+) site. 52–55 (NFSH) lines the ATP pocket. ATP contacts are provided by Arg91 and Lys177. Residue Glu242 participates in Mg(2+) binding. 3 residues coordinate substrate: Gly265, Asp266, and Thr298. Asp266 is a Mg(2+) binding site.

This sequence belongs to the pyruvate kinase family. In terms of assembly, homotetramer. Requires Mg(2+) as cofactor. K(+) is required as a cofactor.

It catalyses the reaction pyruvate + ATP = phosphoenolpyruvate + ADP + H(+). It functions in the pathway carbohydrate degradation; glycolysis; pyruvate from D-glyceraldehyde 3-phosphate: step 5/5. The sequence is that of Pyruvate kinase (pyk) from Dictyostelium discoideum (Social amoeba).